Reading from the N-terminus, the 466-residue chain is UDP-N-acetylmuramoylalanine--D-glutamate ligase (466 aa).

121–127 (GTNGKST) is a binding site for ATP.

This sequence belongs to the MurCDEF family.

It localises to the cytoplasm. The enzyme catalyses UDP-N-acetyl-alpha-D-muramoyl-L-alanine + D-glutamate + ATP = UDP-N-acetyl-alpha-D-muramoyl-L-alanyl-D-glutamate + ADP + phosphate + H(+). Its pathway is cell wall biogenesis; peptidoglycan biosynthesis. Functionally, cell wall formation. Catalyzes the addition of glutamate to the nucleotide precursor UDP-N-acetylmuramoyl-L-alanine (UMA). The chain is UDP-N-acetylmuramoylalanine--D-glutamate ligase from Nitrobacter winogradskyi (strain ATCC 25391 / DSM 10237 / CIP 104748 / NCIMB 11846 / Nb-255).